The primary structure comprises 226 residues: Large ribosomal subunit protein uL1 (226 aa).

Belongs to the universal ribosomal protein uL1 family. As to quaternary structure, part of the 50S ribosomal subunit.

Binds directly to 23S rRNA. The L1 stalk is quite mobile in the ribosome, and is involved in E site tRNA release. Functionally, protein L1 is also a translational repressor protein, it controls the translation of the L11 operon by binding to its mRNA. This is Large ribosomal subunit protein uL1 from Borreliella afzelii (strain PKo) (Borrelia afzelii).